A 286-amino-acid polypeptide reads, in one-letter code: Nucleotide-binding protein HS_1178 (286 aa).

8–15 (GRSGAGKS) serves as a coordination point for ATP. 56–59 (DIRN) provides a ligand contact to GTP.

It belongs to the RapZ-like family.

Functionally, displays ATPase and GTPase activities. The sequence is that of Nucleotide-binding protein HS_1178 from Histophilus somni (strain 129Pt) (Haemophilus somnus).